We begin with the raw amino-acid sequence, 148 residues long: Lysozyme-like protein 6 (148 aa).

Positions 1 to 19 are cleaved as a signal peptide; the sequence is MTSPLLISLASCLVAVNQA. The region spanning 20–148 is the C-type lysozyme domain; the sequence is SLIGRCDLAK…SYWMTGCHLA (129 aa). Disulfide bonds link cysteine 25/cysteine 145, cysteine 49/cysteine 133, cysteine 83/cysteine 98, and cysteine 94/cysteine 112. Active-site residues include glutamate 54 and aspartate 71.

It belongs to the glycosyl hydrolase 22 family. Monomer.

It localises to the secreted. The protein resides in the cell surface. It is found in the cell projection. Its subcellular location is the cilium. The protein localises to the flagellum. It carries out the reaction Hydrolysis of (1-&gt;4)-beta-linkages between N-acetylmuramic acid and N-acetyl-D-glucosamine residues in a peptidoglycan and between N-acetyl-D-glucosamine residues in chitodextrins.. Its function is as follows. May be involved sperm-egg plasma membrane adhesion and fusion during fertilization. Exhibits bacteriolytic activity in vitro against Micrococcus luteus and Staphylococcus aureus. Shows weak bacteriolytic activity against Gram-positive bacteria at physiological pH. Bacteriolytic activity is pH-dependent, with a maximum at around pH 5.6. The protein is Lysozyme-like protein 6 (LYZL6) of Bos taurus (Bovine).